We begin with the raw amino-acid sequence, 564 residues long: Septation ring formation regulator EzrA (564 aa).

Residues 1–4 (MVLY) are Extracellular-facing. A helical transmembrane segment spans residues 5–23 (IILAIIVIILIAVGVLFYL). Residues 24 to 564 (RSNKRQIIEK…KHIEEEVIKQ (541 aa)) lie on the Cytoplasmic side of the membrane. 5 coiled-coil regions span residues 99 to 138 (SFNA…YKDN), 190 to 223 (DGNY…LIRE), 271 to 300 (LISR…LIEH), 350 to 435 (VRQF…RRLL), and 471 to 550 (VKQL…ESVE).

The protein belongs to the EzrA family.

The protein resides in the cell membrane. Negative regulator of FtsZ ring formation; modulates the frequency and position of FtsZ ring formation. Inhibits FtsZ ring formation at polar sites. Interacts either with FtsZ or with one of its binding partners to promote depolymerization. The protein is Septation ring formation regulator EzrA of Staphylococcus aureus (strain JH1).